A 183-amino-acid chain; its full sequence is Oligoribonuclease (183 aa).

The region spanning 8 to 171 is the Exonuclease domain; it reads LIWLDMEMTG…ADIRESIAEL (164 aa). Tyr129 is a catalytic residue.

It belongs to the oligoribonuclease family.

Its subcellular location is the cytoplasm. In terms of biological role, 3'-to-5' exoribonuclease specific for small oligoribonucleotides. This chain is Oligoribonuclease, found in Aromatoleum aromaticum (strain DSM 19018 / LMG 30748 / EbN1) (Azoarcus sp. (strain EbN1)).